A 427-amino-acid polypeptide reads, in one-letter code: L-rhamnose isomerase (427 aa).

The Mn(2+) site is built by His264, Asp296, and Asp298.

This sequence belongs to the rhamnose isomerase family. Mn(2+) serves as cofactor.

The protein resides in the cytoplasm. It catalyses the reaction L-rhamnopyranose = L-rhamnulose. The protein operates within carbohydrate degradation; L-rhamnose degradation; glycerone phosphate from L-rhamnose: step 1/3. Functionally, catalyzes the interconversion of L-rhamnose and L-rhamnulose. The chain is L-rhamnose isomerase from Rhodopirellula baltica (strain DSM 10527 / NCIMB 13988 / SH1).